Reading from the N-terminus, the 569-residue chain is Glutamate--tRNA ligase (569 aa).

Residues Pro-99–His-109 carry the 'HIGH' region motif.

The protein belongs to the class-I aminoacyl-tRNA synthetase family. Glutamate--tRNA ligase type 2 subfamily.

The protein localises to the cytoplasm. It catalyses the reaction tRNA(Glu) + L-glutamate + ATP = L-glutamyl-tRNA(Glu) + AMP + diphosphate. Its function is as follows. Catalyzes the attachment of glutamate to tRNA(Glu) in a two-step reaction: glutamate is first activated by ATP to form Glu-AMP and then transferred to the acceptor end of tRNA(Glu). The protein is Glutamate--tRNA ligase of Korarchaeum cryptofilum (strain OPF8).